Consider the following 375-residue polypeptide: Alcohol dehydrogenase 1 (375 aa).

The residue at position 1 (Ser1) is an N-acetylserine. Residues Cys46, His67, Cys97, Cys100, Cys103, Cys111, and Cys175 each coordinate Zn(2+). Residues 200-205 (GLGGVG), Asp224, Lys229, 293-295 (VGV), and Arg370 each bind NAD(+).

Belongs to the zinc-containing alcohol dehydrogenase family. Class-I subfamily. As to quaternary structure, homodimer. The cofactor is Zn(2+).

The protein resides in the cytoplasm. It carries out the reaction a primary alcohol + NAD(+) = an aldehyde + NADH + H(+). The catalysed reaction is a secondary alcohol + NAD(+) = a ketone + NADH + H(+). The chain is Alcohol dehydrogenase 1 (ADH1) from Coturnix japonica (Japanese quail).